Here is a 365-residue protein sequence, read N- to C-terminus: Aminomethyltransferase (365 aa).

This sequence belongs to the GcvT family. The glycine cleavage system is composed of four proteins: P, T, L and H.

The catalysed reaction is N(6)-[(R)-S(8)-aminomethyldihydrolipoyl]-L-lysyl-[protein] + (6S)-5,6,7,8-tetrahydrofolate = N(6)-[(R)-dihydrolipoyl]-L-lysyl-[protein] + (6R)-5,10-methylene-5,6,7,8-tetrahydrofolate + NH4(+). Functionally, the glycine cleavage system catalyzes the degradation of glycine. The protein is Aminomethyltransferase of Chlorobium luteolum (strain DSM 273 / BCRC 81028 / 2530) (Pelodictyon luteolum).